The chain runs to 970 residues: Polycystin-2 (970 aa).

Polar residues predominate over residues 1–11 (MVNSSRVQPQQ). The segment at 1–182 (MVNSSRVQPQ…GDPLHRHLPL (182 aa)) is disordered. The Cytoplasmic segment spans residues 1-221 (MVNSSRVQPQ…STDREKYLKS (221 aa)). Low complexity predominate over residues 25 to 45 (GPGRLMAGGAIAGAGLAAPGG). Positions 47–60 (REQRGLEIEMERIR) are enriched in basic and acidic residues. Residues 62-83 (AAARDPPAGASASPSPPLSSCS) are compositionally biased toward low complexity. Phosphoserine is present on residues Ser76 and Ser80. The span at 95–109 (EAEEEEEEEEVEGEE) shows a compositional bias: acidic residues. Residues 125–138 (RRSASSSAVSSAGA) are compositionally biased toward low complexity. At Arg139 the chain carries Omega-N-methylarginine. A compositionally biased stretch (gly residues) spans 139 to 148 (RGRGLGGYHG). A helical transmembrane segment spans residues 222–243 (VLRELATYLLFLIVLCILTYGM). Topologically, residues 244–470 (MSSSVYYYTR…PVKLIRYVTT (227 aa)) are extracellular. 3 N-linked (GlcNAc...) asparagine glycosylation sites follow: Asn301, Asn307, and Asn330. Cys333 and Cys346 form a disulfide bridge. 2 N-linked (GlcNAc...) asparagine glycosylation sites follow: Asn364 and Asn377. The chain crosses the membrane as a helical span at residues 471-491 (FDFFLAACEIIFCLFILYYVV). Residues 492–507 (EEILEIRIHKLHYFRS) lie on the Cytoplasmic side of the membrane. Residues 508 to 528 (FWNCLDVVIIVLSVVAIGINI) form a helical membrane-spanning segment. The Extracellular segment spans residues 529–554 (YRTSNVEALLQFLEDQNTFPNFENLA). The helical transmembrane segment at 555 to 575 (YWQTQFNNIAAVIVFFVWIKL) threads the bilayer. Gln559 provides a ligand contact to cholesterol. Topologically, residues 576–599 (FKFINFNRTMSQLSTTMSRCAKDL) are cytoplasmic. A helical membrane pass occupies residues 600 to 621 (FGFAIMFFIIFLAYAQLAYLVF). At 622-633 (GTQVDDFSTFQE) the chain is on the extracellular side. Residues 634 to 648 (CIFTQFRIILGDINF) constitute an intramembrane region (pore-forming). Leu643 contacts Ca(2+). The Selectivity filter signature appears at 643–645 (LGD). Residues 649-656 (AEIEEANR) are Extracellular-facing. A helical membrane pass occupies residues 657 to 677 (VLGPIYFTTFVFFMFFILLNM). At 678–970 (FLAIINDTYS…GGNGSANIHV (293 aa)) the chain is on the cytoplasmic side. The EF-hand domain occupies 750–785 (KGHTDAEIEAIFTKYDQDGDQELTEHEHQQMRDDLE). Ca(2+)-binding residues include Asp765, Asp767, Asp769, Glu771, and Glu776. Positions 766–833 (QDGDQELTEH…HSSRRRGSIS (68 aa)) are disordered. Positions 772–797 (LTEHEHQQMRDDLEKEREDLDLDHSS) are enriched in basic and acidic residues. A compositionally biased stretch (low complexity) spans 798–809 (LPRPMSSRSFPR). A phosphoserine mark is found at Ser803, Ser810, Ser814, and Ser831. Residues 805–824 (RSFPRSLDDSEEEDDDDSGH) form a linker region. Positions 812–823 (DDSEEEDDDDSG) are important for interaction with PACS1 and PACS2. The stretch at 835–874 (GVSYEEFQVLVRRVDRMEHSIGSIVSKIDAVIVKLEIMER) forms a coiled coil. The tract at residues 921–970 (DDAASQISHGLGTPLGLNGQPRPRSSRPSSSQSTEGMEGGGGNGSANIHV) is disordered. Residues 940-956 (QPRPRSSRPSSSQSTEG) are compositionally biased toward low complexity.

This sequence belongs to the polycystin family. In terms of assembly, homotetramer. Component of the heterotetrameric polycystin channel complex with PKD1; the tetramer contains one PKD1 chain and three PKD2 chains. Isoform 1 interacts with PKD1 while isoform 3 does not. Interacts with PKD1L1; probably forms a Ca(2+) channel. Interacts with CD2AP. Interacts with HAX1. Interacts with NEK8. Part of a complex containing AKAP5, ADCY5, ADCY6 and PDE4C. Interacts (via C-terminus) with TRPV4 (via C-terminus). Interacts (via C-terminal acidic region) with PACS1 and PACS2; these interactions retain the protein in the endoplasmic reticulum and prevent trafficking to the cell membrane. Interacts with TMEM33. Form a heterotetramer with TRPC1 with a 2:2 stoichiometry; has distinct channel properties separate from PKD2 or TRPC1 homomers alone. Interacts with TMEM120A; TMEM120A inhibits PKD2 channel activity through the physical association of PKD2 with TMEM120A. Interacts (via N-terminus) with RYR2; regulates RYR2 channel activity. In terms of processing, N-glycosylated. The four subunits in a tetramer probably differ in the extent of glycosylation; simultaneous glycosylation of all experimentally validated sites would probably create steric hindrance. Post-translationally, phosphorylated. Phosphorylation is important for protein function; a mutant that lacks the N-terminal phosphorylation sites cannot complement a zebrafish pkd2-deficient mutant. PKD-mediated phosphorylation at the C-terminus regulates its function in the release of Ca(2+) stores from the endoplasmic reticulum. Phosphorylation at Ser-814 regulates PKD2 trafficking. Phosphorylation at Ser-76 is required for PKD2 trafficking to or retention at the lateral plasma membrane. Phosphorylation at Ser-803, Ser-814 and Ser-831 regulates PKD2 channel activity. Sumoylated by SUMO1; sumoylation regulates PKD2 membrane recycling and is necessary for intravascular pressure-induced arterial contractility. Expressed in mesenchymally derived structures in the developing embryo at day 12.5. In adult, mostly expressed in kidney.

It is found in the cell projection. The protein localises to the cilium membrane. Its subcellular location is the endoplasmic reticulum membrane. The protein resides in the cell membrane. It localises to the basolateral cell membrane. It is found in the cytoplasmic vesicle membrane. The protein localises to the golgi apparatus. Its subcellular location is the vesicle. The protein resides in the secreted. It localises to the extracellular exosome. The catalysed reaction is K(+)(in) = K(+)(out). The enzyme catalyses Na(+)(in) = Na(+)(out). It catalyses the reaction Ca(2+)(in) = Ca(2+)(out). Its activity is regulated as follows. Channel activity is regulated by phosphorylation. Channel activity is regulated by intracellular Ca(2+). At the endoplasmic reticulum membrane (ER), TMEM33 enhances its channel activity. TMEM120A inhibits the channel activity of PKD2, and mediates mechanosensitivity of the PKD2-TMEM120A channel complex. PKD1/PKD2 complex on the plasma membrane is activated by PKD1 N-terminus. Forms a nonselective cation channel. Can function as a homotetrameric ion channel or can form heteromer with PKD1. Displays distinct function depending on its subcellular localization and regulation by its binding partners. Functions as a cation channel, with a preference for monovalent cations over divalent cations that allows K(+), Na(+) and Ca(2+) influx, with low selectivity for Ca(2+). Involved in fluid-flow mechanosensation in the primary cilium in renal epithelium. In the endoplasmic reticulum, likely functions as a K(+) channel to facilitate Ca(2+) release. The heterotetrameric PKD1/PKD2 channel has higher Ca(2+) permeability than homomeric PKD2 channel and acts as a primarily Ca(2+)-permeable channel. Interacts with and acts as a regulator of a number of other channels, such as TRPV4, TRPC1, IP3R, RYR2, ultimately further affecting intracellular signaling, to modulate intracellular Ca(2+) signaling. Together with TRPV4, forms mechano- and thermosensitive channels in cilium. In cardiomyocytes, PKD2 modulates Ca(2+) release from stimulated RYR2 receptors through direct association. Also involved in left-right axis specification via its role in sensing nodal flow; forms a complex with PKD1L1 in cilia to facilitate flow detection in left-right patterning. Acts as a regulator of cilium length together with PKD1. Mediates systemic blood pressure and contributes to the myogenic response in cerebral arteries though vasoconstriction. The chain is Polycystin-2 from Bos taurus (Bovine).